The primary structure comprises 610 residues: MKWVVSIFLIVLLNFTESRTMHENAYGIASILDSSQCSAEMNLVDLATIFFAQFVQEATYKEVNQMVKDVLTVIEKSTGSEQPAGCLENQVSVFLEEICHEEEIPEKYGLSHCCSQSGEERHNCFLARKKAAPASIPPFQVPEPVTSCKAYEENRELFMTRYIYEIARRHPFLYAPTILSLAAQYDKIIPPCCKAENAVECFQTKAASITKELRESSLLNQHMCTVMRQFGARTFRAITVTKLSQKFPKANFTEIQKLVLDVAHIHEECCRGNVLECLQDAERVVSYVCSQQDTLSSKIAECCKLPTTLELGQCIIHAENDDKPEGLSPNLNRFLGERDFNQLSSREKDLSMARFTYEYSRRHPKLAVPVILRVAKGYQELLEKCSQSENPLECQDKGEEELEKYIQESQALAKRSCGLFQKLGEYYLQNAFLVAYTKKAPQLTPPELMALTRKMATTGAACCHLSEDRQLACGEGAADLIIGQLCIRHEEMPINPGVGQCCTSSYANRRPCFSSLVLDETYVPPPFSDDKFIFHKDLCQAQGVALQTMKQQFLINLVKQKPQITEEQLEAVIADFSGLLEKCCQGQEQEVCFAEEGPALISKTRASLGV.

The first 18 residues, 1-18 (MKWVVSIFLIVLLNFTES), serve as a signal peptide directing secretion. Albumin domains are found at residues 19–210 (RTMH…ASIT), 211–403 (KELR…EELE), and 404–602 (KYIQ…ALIS). His-22 serves as a coordination point for Cu(2+). 8 cysteine pairs are disulfide-bonded: Cys-99–Cys-114, Cys-113–Cys-124, Cys-148–Cys-193, Cys-192–Cys-201, Cys-224–Cys-270, Cys-269–Cys-277, Cys-289–Cys-303, and Cys-302–Cys-314. 3 positions are modified to phosphoserine: Ser-111, Ser-115, and Ser-117. N-linked (GlcNAc...) asparagine glycosylation is present at Asn-251. At Ser-345 the chain carries Phosphoserine. Cystine bridges form between Cys-385–Cys-394, Cys-417–Cys-463, Cys-462–Cys-473, Cys-486–Cys-502, Cys-501–Cys-512, Cys-539–Cys-584, and Cys-583–Cys-592.

Belongs to the ALB/AFP/VDB family. Dimeric and trimeric forms have been found in addition to the monomeric form. Plasma. Synthesized by the fetal liver and yolk sac.

It localises to the secreted. Its function is as follows. Binds copper, nickel, and fatty acids as well as, and bilirubin less well than, serum albumin. The sequence is that of Alpha-fetoprotein (AFP) from Sus scrofa (Pig).